Consider the following 186-residue polypeptide: Type 1 phosphatases regulator ypi-1 (186 aa).

Polar residues predominate over residues 1-32; that stretch reads MTSVAQRQAQPAQPSTSQTAAPTRTQTETSSP. Positions 1 to 186 are disordered; that stretch reads MTSVAQRQAQ…SETQGPGGSK (186 aa). Over residues 82–94 the composition is skewed to low complexity; that stretch reads DSSSSSDSSSSSD. Positions 122-137 are enriched in basic and acidic residues; that stretch reads HDHDHDGREGGCNHDH. The span at 138–151 shows a compositional bias: basic residues; sequence GRGRKHGNKGKKTE.

It belongs to the YPI1 family.

The protein resides in the nucleus. Its function is as follows. Regulator of type 1 phosphatases which maintains protein phosphatase activity under strict control. This is Type 1 phosphatases regulator ypi-1 (ypi-1) from Neurospora crassa (strain ATCC 24698 / 74-OR23-1A / CBS 708.71 / DSM 1257 / FGSC 987).